A 294-amino-acid polypeptide reads, in one-letter code: Probable metallo-hydrolase BURPS1710b_2304 (294 aa).

Residues histidine 68, histidine 70, aspartate 72, histidine 73, histidine 143, aspartate 170, and histidine 212 each contribute to the a divalent metal cation site.

It belongs to the metallo-beta-lactamase superfamily. A divalent metal cation serves as cofactor.

Probable hydrolase. Does not have beta-lactamase activity. The protein is Probable metallo-hydrolase BURPS1710b_2304 of Burkholderia pseudomallei (strain 1710b).